The following is a 252-amino-acid chain: 2-succinyl-6-hydroxy-2,4-cyclohexadiene-1-carboxylate synthase (252 aa).

This sequence belongs to the AB hydrolase superfamily. MenH family. Monomer.

It catalyses the reaction 5-enolpyruvoyl-6-hydroxy-2-succinyl-cyclohex-3-ene-1-carboxylate = (1R,6R)-6-hydroxy-2-succinyl-cyclohexa-2,4-diene-1-carboxylate + pyruvate. It participates in quinol/quinone metabolism; 1,4-dihydroxy-2-naphthoate biosynthesis; 1,4-dihydroxy-2-naphthoate from chorismate: step 3/7. It functions in the pathway quinol/quinone metabolism; menaquinone biosynthesis. In terms of biological role, catalyzes a proton abstraction reaction that results in 2,5-elimination of pyruvate from 2-succinyl-5-enolpyruvyl-6-hydroxy-3-cyclohexene-1-carboxylate (SEPHCHC) and the formation of 2-succinyl-6-hydroxy-2,4-cyclohexadiene-1-carboxylate (SHCHC). The protein is 2-succinyl-6-hydroxy-2,4-cyclohexadiene-1-carboxylate synthase of Escherichia coli (strain ATCC 8739 / DSM 1576 / NBRC 3972 / NCIMB 8545 / WDCM 00012 / Crooks).